Consider the following 538-residue polypeptide: Phosphoenolpyruvate carboxykinase (ATP) (538 aa).

Arg64 contacts substrate. Arg152 contributes to the ATP binding site. Tyr205 and Lys211 together coordinate substrate. ATP contacts are provided by residues Lys211, His230, and 246–254 (GLSGTGKTT). Mn(2+) is bound by residues Lys211 and His230. Asp267 contributes to the Mn(2+) binding site. Residues Glu295, Arg331, Arg344, 447–448 (RI), and Thr453 each bind ATP. Arg331 is a binding site for substrate.

The protein belongs to the phosphoenolpyruvate carboxykinase (ATP) family. Monomer. The cofactor is Mn(2+).

The protein resides in the cytoplasm. It catalyses the reaction oxaloacetate + ATP = phosphoenolpyruvate + ADP + CO2. Its pathway is carbohydrate biosynthesis; gluconeogenesis. Its function is as follows. Involved in gluconeogenesis. Catalyzes the conversion of oxaloacetate (OAA) to phosphoenolpyruvate (PEP) through direct phosphoryl transfer between the nucleoside triphosphate and OAA. This Actinobacillus succinogenes (strain ATCC 55618 / DSM 22257 / CCUG 43843 / 130Z) protein is Phosphoenolpyruvate carboxykinase (ATP).